A 382-amino-acid chain; its full sequence is Elongation factor Tu (382 aa).

Residues 1–7 (HVDHGKT), 62–66 (DCPGH), and 117–120 (NKVD) contribute to the GTP site. One can recognise a tr-type G domain in the interval 1–190 (HVDHGKTTLT…AVDEYIPTPQ (190 aa)). Residue threonine 7 participates in Mg(2+) binding.

This sequence belongs to the TRAFAC class translation factor GTPase superfamily. Classic translation factor GTPase family. EF-Tu/EF-1A subfamily. Monomer.

The protein resides in the cytoplasm. It carries out the reaction GTP + H2O = GDP + phosphate + H(+). Its function is as follows. GTP hydrolase that promotes the GTP-dependent binding of aminoacyl-tRNA to the A-site of ribosomes during protein biosynthesis. In Chloroflexus aurantiacus, this protein is Elongation factor Tu.